Reading from the N-terminus, the 471-residue chain is ATP synthase subunit beta (471 aa).

153 to 160 (GGAGVGKT) lines the ATP pocket.

This sequence belongs to the ATPase alpha/beta chains family. F-type ATPases have 2 components, CF(1) - the catalytic core - and CF(0) - the membrane proton channel. CF(1) has five subunits: alpha(3), beta(3), gamma(1), delta(1), epsilon(1). CF(0) has four main subunits: a(1), b(1), b'(1) and c(9-12).

The protein localises to the cell membrane. The catalysed reaction is ATP + H2O + 4 H(+)(in) = ADP + phosphate + 5 H(+)(out). Its function is as follows. Produces ATP from ADP in the presence of a proton gradient across the membrane. The catalytic sites are hosted primarily by the beta subunits. The polypeptide is ATP synthase subunit beta (Chloroflexus aggregans (strain MD-66 / DSM 9485)).